We begin with the raw amino-acid sequence, 644 residues long: Sodium/hydrogen exchanger 9 (644 aa).

Residues 1–20 (MAGQLRFTSGKDEDHFQHQG) are Lumenal-facing. The chain crosses the membrane as a helical span at residues 21–41 (AVELLAFNFLLILTILTIWLF). The Cytoplasmic portion of the chain corresponds to 42–45 (KNHR). The helical transmembrane segment at 46 to 66 (FRFLHETGGAMVYGLIMGLIL) threads the bilayer. At 67 to 126 (RYATAPTDIDSGTVYNCGNLFFSPSTLLVNITDQVYEYKYQREINQHNISPHQGNAILEK) the chain is on the lumenal side. A helical transmembrane segment spans residues 127-147 (MTFDPEIFFNVLLPPIIFHAG). Residues 148–164 (YSLKKRHFFQNLGSILT) lie on the Cytoplasmic side of the membrane. The chain crosses the membrane as a helical span at residues 165-185 (YAFLGTAISCVVIGLIMYGFV). At 186 to 203 (KAMVHAGQLKSGDFHFTD) the chain is on the lumenal side. A helical membrane pass occupies residues 204–224 (CLFFGSLMSATDPVTVLAIFH). Residues 225–235 (ELHVDPDLYTL) lie on the Cytoplasmic side of the membrane. Residues 236 to 256 (LFGESVLNDAVAIVLTYSISI) traverse the membrane as a helical segment. Residues 257-277 (YSPKENPNAFDTAAFFQSVGN) lie on the Lumenal side of the membrane. A helical membrane pass occupies residues 278-298 (FLGIFAGSFAMGSAYAVVTAL). The Cytoplasmic segment spans residues 299 to 309 (LTKFTKLREFP). Residues 310 to 327 (MLETGLFFLLSWSAFLSA) traverse the membrane as a helical segment. The Lumenal portion of the chain corresponds to 328–333 (EAAGLT). A helical membrane pass occupies residues 334–350 (GIVAVLFCGVTQAHYTY). Over 351 to 364 (NNLSSDSKLRTKQL) the chain is Cytoplasmic. A helical membrane pass occupies residues 365-385 (FEFMNFLAENVIFCYMGLALF). Position 386 (Thr386) is a topological domain, lumenal. Residues 387-407 (FQNHIFNALFILGAFLAIFVA) form a helical membrane-spanning segment. The Cytoplasmic segment spans residues 408 to 429 (RACNIYPLSFLLNLGRKQKIPW). Residues 430 to 450 (NFQHMMMFSGLRGAIAFALAI) form a helical membrane-spanning segment. Topologically, residues 451–465 (RNTESQPKQMMFTTT) are lumenal. Residues 466–486 (LLLVFFTVWVFGGGTTPMLTW) traverse the membrane as a helical segment. The Cytoplasmic portion of the chain corresponds to 487–644 (LQIRVGVDLD…EQTRGQPQMD (158 aa)). The disordered stretch occupies residues 590 to 644 (YQEQSPSPSSPTTKLALDQKSSGQTPGKENIYEGDLGLGGYDLKLEQTRGQPQMD).

It belongs to the monovalent cation:proton antiporter 1 (CPA1) transporter (TC 2.A.36) family. In terms of assembly, homodimer; phosphatidylinositol-4,5-bisphosphate (PIP2) and phosphatidylinositol 3,4,5-trisphosphate (PIP3) could be involved in the dimer stabilization. Interacts (via the C-terminus) with RACK1. Interacts with CHP1. In terms of tissue distribution, expressed in the brain. Highly expressed in immune cells, specifically macrophages.

It is found in the late endosome membrane. It localises to the cell membrane. Its subcellular location is the early endosome membrane. The protein resides in the recycling endosome membrane. The protein localises to the cytoplasmic vesicle. It is found in the phagosome membrane. It carries out the reaction Na(+)(in) + H(+)(out) = Na(+)(out) + H(+)(in). The enzyme catalyses K(+)(in) + H(+)(out) = K(+)(out) + H(+)(in). Its function is as follows. Endosomal Na(+), K(+)/H(+) antiporter. Mediates the electroneutral exchange of endosomal luminal H(+) for a cytosolic Na(+) or K(+). By facilitating proton efflux, SLC9A9 counteracts the acidity generated by vacuolar (V)-ATPase, thereby limiting luminal acidification. Regulates organellar pH and consequently, endosome maturation and endocytic trafficking of plasma membrane receptors and neurotransporters. Promotes the recycling of transferrin receptors back to the cell surface to facilitate additional iron uptake in the brain. Regulates synaptic transmission by regulating the luminal pH of axonal endosomes. Regulates phagosome lumenal pH, thus affecting phagosome maturation, and consequently, microbicidal activity in macrophages. Can also be active at the cell surface of specialized cells, e.g., in the inner ear hair bundles uses the high K(+) of the endolymph to regulate intracelular pH. The polypeptide is Sodium/hydrogen exchanger 9 (Slc9a9) (Mus musculus (Mouse)).